We begin with the raw amino-acid sequence, 317 residues long: Large ribosomal subunit protein uL10 (317 aa).

Positions Ser280–Ala290 are enriched in low complexity. Residues Ser280–Asp317 are disordered. Residues Thr291 to Ser302 show a composition bias toward basic and acidic residues. A Phosphoserine modification is found at Ser302. Ser304 carries the phosphoserine; by CK1 modification.

This sequence belongs to the universal ribosomal protein uL10 family. As to quaternary structure, P0 forms a pentameric complex by interaction with dimers of P1 and P2.

The protein resides in the cytoplasm. Its subcellular location is the nucleus. Ribosomal protein P0 is the functional equivalent of E.coli protein L10. This is Large ribosomal subunit protein uL10 (RpLP0) from Drosophila melanogaster (Fruit fly).